Reading from the N-terminus, the 513-residue chain is E3 ubiquitin-protein ligase XBAT33 (513 aa).

5 ANK repeats span residues 44–73 (GLNS…DVNS), 77–106 (CGQT…NVTR), 111–140 (AGRT…PSDK), 171–200 (GGIT…NVSA), and 214–244 (AGST…KMTL). Residues 312–362 (CAVCLERTCTVAAEGCEHQLCVRCALYLCSSSNVPSVTVGPPGSIPCPLCR) form an RING-type zinc finger. Disordered stretches follow at residues 397-417 (DTTD…SKTR) and 455-483 (HGTE…EEGQ). Composition is skewed to basic and acidic residues over residues 455–466 (HGTERHSEEHVE) and 474–483 (TEQEKIEEGQ).

It catalyses the reaction S-ubiquitinyl-[E2 ubiquitin-conjugating enzyme]-L-cysteine + [acceptor protein]-L-lysine = [E2 ubiquitin-conjugating enzyme]-L-cysteine + N(6)-ubiquitinyl-[acceptor protein]-L-lysine.. It functions in the pathway protein modification; protein ubiquitination. Its function is as follows. Possesses E3 ubiquitin-protein ligase activity when associated with the E2 enzyme UBC8 in vitro. In Arabidopsis thaliana (Mouse-ear cress), this protein is E3 ubiquitin-protein ligase XBAT33 (XBAT33).